The sequence spans 302 residues: Adipolin (302 aa).

An N-terminal signal peptide occupies residues 1 to 20 (MRRWAWAAVVVLLGPQLVLL). Disordered stretches follow at residues 28 to 68 (EAQR…GPEF) and 86 to 110 (ALRK…PPGA). Asn-43 carries N-linked (GlcNAc...) asparagine glycosylation. Over residues 86–100 (ALRKRCGSRDKKPRD) the composition is skewed to basic and acidic residues. A C1q domain is found at 147–302 (LRLVGEAFHC…SSFSGLLLGT (156 aa)).

It belongs to the adipolin/erythroferrone family. Homomultimer; disulfide-linked. May interact with ERFE. Post-translationally, processed into Adipolin fC1QTNF12 and Adipolin gC1QTNF12 by FURIN. Insulin enhances endogenous C1QTNF12 cleavage. In terms of tissue distribution, predominantly expressed by adipose tissues.

Its subcellular location is the secreted. In terms of biological role, insulin-sensitizing adipocyte-secreted protein (adipokine) that regulates glucose metabolism in liver and adipose tissue. Promotes glucose uptake in adipocytes and suppresses de novo glucose production in hepatocytes via the PI3K-Akt signaling pathway. Administration lead to reduction of blood glucose. Able to attenuate inflammation in fat tissue. The sequence is that of Adipolin from Homo sapiens (Human).